The chain runs to 314 residues: tRNA dimethylallyltransferase (314 aa).

9–16 (GPTAVGKT) contributes to the ATP binding site. 11 to 16 (TAVGKT) is a substrate binding site. The interaction with substrate tRNA stretch occupies residues 34 to 37 (DSVQ).

This sequence belongs to the IPP transferase family. As to quaternary structure, monomer. The cofactor is Mg(2+).

The enzyme catalyses adenosine(37) in tRNA + dimethylallyl diphosphate = N(6)-dimethylallyladenosine(37) in tRNA + diphosphate. In terms of biological role, catalyzes the transfer of a dimethylallyl group onto the adenine at position 37 in tRNAs that read codons beginning with uridine, leading to the formation of N6-(dimethylallyl)adenosine (i(6)A). The chain is tRNA dimethylallyltransferase from Desulfitobacterium hafniense (strain Y51).